The primary structure comprises 199 residues: Recombination protein RecR (199 aa).

The segment at Cys58–Cys73 adopts a C4-type zinc-finger fold. The region spanning Arg81 to Pro176 is the Toprim domain.

Belongs to the RecR family.

May play a role in DNA repair. It seems to be involved in an RecBC-independent recombinational process of DNA repair. It may act with RecF and RecO. In Acidobacterium capsulatum (strain ATCC 51196 / DSM 11244 / BCRC 80197 / JCM 7670 / NBRC 15755 / NCIMB 13165 / 161), this protein is Recombination protein RecR.